The primary structure comprises 228 residues: Chaperone protein FanE (228 aa).

The N-terminal stretch at 1–19 (MNKFISIIALCVFSSYANA) is a signal peptide. C157 and C198 are joined by a disulfide.

Belongs to the periplasmic pilus chaperone family.

It is found in the periplasm. Functionally, mediates assembly of pili by forming soluble multimeric complexes with pili subunits as an intermediate step in the assembly process. This protein is involved in K99 pili assembly. This Escherichia coli protein is Chaperone protein FanE (fanE).